A 186-amino-acid polypeptide reads, in one-letter code: MNVKDVSQKSEQKMKKAIEAFQHEIASIRTGKATTALLDRVKVEAYGQTMPLRQVGNVGVSDIHTLLVQVWDKSMVAATEKAIRDANLGLNPAAEGQSIRVSIPPLTEERRKEFVKLTRKFGEDSKVSLRNHRRDMIQEIEKLEKEKAISEDDRNRGKKDADDLLHRFEKQVNELIAQKEKEIMEV.

This sequence belongs to the RRF family.

It localises to the cytoplasm. Functionally, responsible for the release of ribosomes from messenger RNA at the termination of protein biosynthesis. May increase the efficiency of translation by recycling ribosomes from one round of translation to another. The chain is Ribosome-recycling factor from Chlorobium luteolum (strain DSM 273 / BCRC 81028 / 2530) (Pelodictyon luteolum).